Consider the following 343-residue polypeptide: Biotin synthase (343 aa).

One can recognise a Radical SAM core domain in the interval 36 to 254 (NTIQISTLLS…IAVARIMMPK (219 aa)). Positions 51, 55, and 58 each coordinate [4Fe-4S] cluster. [2Fe-2S] cluster contacts are provided by Cys-95, Cys-126, Cys-186, and Arg-258.

Belongs to the radical SAM superfamily. Biotin synthase family. In terms of assembly, homodimer. It depends on [4Fe-4S] cluster as a cofactor. The cofactor is [2Fe-2S] cluster.

The catalysed reaction is (4R,5S)-dethiobiotin + (sulfur carrier)-SH + 2 reduced [2Fe-2S]-[ferredoxin] + 2 S-adenosyl-L-methionine = (sulfur carrier)-H + biotin + 2 5'-deoxyadenosine + 2 L-methionine + 2 oxidized [2Fe-2S]-[ferredoxin]. Its pathway is cofactor biosynthesis; biotin biosynthesis; biotin from 7,8-diaminononanoate: step 2/2. Catalyzes the conversion of dethiobiotin (DTB) to biotin by the insertion of a sulfur atom into dethiobiotin via a radical-based mechanism. This chain is Biotin synthase, found in Buchnera aphidicola subsp. Acyrthosiphon pisum (strain 5A).